A 417-amino-acid polypeptide reads, in one-letter code: Blood group Rh(CE) polypeptide (417 aa).

Helical transmembrane passes span 12–32 (CLPLCALTLEAALILLFYFFT), 44–64 (LVASYQVGQDLTVMAALGLGF), 77–97 (VAFNLFMLALGVQWAILLDGF), 125–145 (ISAGAVLGKVNLAQLVVMVLV), 172–192 (FYVFAAYFGLTVAWCLPKPLP), 203–223 (TIPSLSAMLGALFLWMFWPSV), 238–258 (MFNTYYALAVSVVTAISGSSL), 265–285 (ISMTYVHSAVLAGGVAVGTSC), 287–307 (LIPSPWLAMVLGLVAGLISIG), 331–351 (IFSLLGLLGEITYIVLLVLHT), and 358–378 (MIGFQVLLSIGELSLAIVIAL).

Belongs to the ammonium transporter (TC 2.A.49) family. Rh subfamily. In terms of assembly, heterotrimer; a RHCE monomer interacts with a RHAG homodimer. Component of the ankyrin-1 complex in the erythrocyte, composed of ANK1, RHCE, RHAG, SLC4A1, EPB42, GYPA, GYPB and AQP1. Interacts (via the N- and C-terminal) with ANK1 (via ANk 1-5 repeats); mediates the primary membrane attachment site for ANK1. As to expression, restricted to tissues or cell lines expressing erythroid characters. Isoform 4g and isoform RhPI-Alpha are expressed in immature erythroblasts but not in mature erythroblasts.

The protein resides in the membrane. Its function is as follows. Component of the ankyrin-1 complex, a multiprotein complex involved in the stability and shape of the erythrocyte membrane. Mediates the primary membrane attachment site for ANK1 when associated with RHAG. May participate in the ammonium and carbon dioxide transport through the heterotrimer form. In Homo sapiens (Human), this protein is Blood group Rh(CE) polypeptide.